Reading from the N-terminus, the 378-residue chain is Ribosomal RNA large subunit methyltransferase G (378 aa).

Belongs to the methyltransferase superfamily. RlmG family.

It localises to the cytoplasm. It carries out the reaction guanosine(1835) in 23S rRNA + S-adenosyl-L-methionine = N(2)-methylguanosine(1835) in 23S rRNA + S-adenosyl-L-homocysteine + H(+). Its function is as follows. Specifically methylates the guanine in position 1835 (m2G1835) of 23S rRNA. The sequence is that of Ribosomal RNA large subunit methyltransferase G from Salmonella newport (strain SL254).